Consider the following 138-residue polypeptide: ATP synthase epsilon chain (138 aa).

This sequence belongs to the ATPase epsilon chain family. As to quaternary structure, F-type ATPases have 2 components, CF(1) - the catalytic core - and CF(0) - the membrane proton channel. CF(1) has five subunits: alpha(3), beta(3), gamma(1), delta(1), epsilon(1). CF(0) has three main subunits: a, b and c.

It is found in the cell inner membrane. Functionally, produces ATP from ADP in the presence of a proton gradient across the membrane. The protein is ATP synthase epsilon chain of Psychrobacter cryohalolentis (strain ATCC BAA-1226 / DSM 17306 / VKM B-2378 / K5).